A 513-amino-acid polypeptide reads, in one-letter code: Ribonuclease Y (513 aa).

Residues 6–26 (YIIIAVVIIIICVILGLYVVD) form a helical membrane-spanning segment. The 86-residue stretch at 203–288 (TVHVVNLPND…EMVEKAKKEV (86 aa)) folds into the KH domain. Residues 329-422 (VLKHSIEVSH…VQAADAISAA (94 aa)) enclose the HD domain.

Belongs to the RNase Y family.

It localises to the cell membrane. Its function is as follows. Endoribonuclease that initiates mRNA decay. The chain is Ribonuclease Y from Clostridium botulinum (strain Loch Maree / Type A3).